Consider the following 123-residue polypeptide: Fluoride-specific ion channel FluC (123 aa).

Transmembrane regions (helical) follow at residues 5–25 (IIAL…YISG), 35–55 (IGTL…YGLL), 67–87 (IFLG…SYET), and 100–120 (FANI…GFIL). Positions 75 and 78 each coordinate Na(+).

It belongs to the fluoride channel Fluc/FEX (TC 1.A.43) family.

It localises to the cell membrane. The catalysed reaction is fluoride(in) = fluoride(out). Its activity is regulated as follows. Na(+) is not transported, but it plays an essential structural role and its presence is essential for fluoride channel function. Fluoride-specific ion channel. Important for reducing fluoride concentration in the cell, thus reducing its toxicity. The sequence is that of Fluoride-specific ion channel FluC from Pyrococcus horikoshii (strain ATCC 700860 / DSM 12428 / JCM 9974 / NBRC 100139 / OT-3).